Here is a 165-residue protein sequence, read N- to C-terminus: Large ribosomal subunit protein uL11 (165 aa).

The residue at position 38 (Ser38) is a Phosphoserine. Residue Lys40 forms a Glycyl lysine isopeptide (Lys-Gly) (interchain with G-Cter in SUMO2) linkage. A Glycyl lysine isopeptide (Lys-Gly) (interchain with G-Cter in ubiquitin) cross-link involves residue Lys48. N6-acetyllysine is present on Lys54. A Glycyl lysine isopeptide (Lys-Gly) (interchain with G-Cter in ubiquitin) cross-link involves residue Lys83. Position 165 is a phosphoserine (Ser165).

Belongs to the universal ribosomal protein uL11 family. As to quaternary structure, component of the large ribosomal subunit. Mature ribosomes consist of a small (40S) and a large (60S) subunit. The 40S subunit contains about 33 different proteins and 1 molecule of RNA (18S). The 60S subunit contains about 49 different proteins and 3 molecules of RNA (28S, 5.8S and 5S). Ubiquitinated at Lys-48 and Lys-83 by RNF14 and RNF25 in response to ribosome collisions (ribosome stalling).

The protein resides in the cytoplasm. In terms of biological role, component of the large ribosomal subunit. The ribosome is a large ribonucleoprotein complex responsible for the synthesis of proteins in the cell. Binds directly to 26S ribosomal RNA. In Rattus norvegicus (Rat), this protein is Large ribosomal subunit protein uL11 (Rpl12).